A 223-amino-acid polypeptide reads, in one-letter code: Ribose-5-phosphate isomerase A (223 aa).

Residues 26-29 (TGST), 82-85 (DGAD), and 95-98 (KGGG) each bind substrate. Glu104 (proton acceptor) is an active-site residue. Lys122 provides a ligand contact to substrate.

The protein belongs to the ribose 5-phosphate isomerase family. As to quaternary structure, homodimer.

It carries out the reaction aldehydo-D-ribose 5-phosphate = D-ribulose 5-phosphate. It participates in carbohydrate degradation; pentose phosphate pathway; D-ribose 5-phosphate from D-ribulose 5-phosphate (non-oxidative stage): step 1/1. Catalyzes the reversible conversion of ribose-5-phosphate to ribulose 5-phosphate. The sequence is that of Ribose-5-phosphate isomerase A from Streptococcus agalactiae serotype III (strain NEM316).